A 393-amino-acid chain; its full sequence is Probable acetyl-CoA acetyltransferase (393 aa).

Thr-2 is a propeptide (removed; alternate). Catalysis depends on Cys-88, which acts as the Acyl-thioester intermediate. Residues His-349 and Cys-379 each act as proton acceptor in the active site.

This sequence belongs to the thiolase-like superfamily. Thiolase family.

It catalyses the reaction 2 acetyl-CoA = acetoacetyl-CoA + CoA. This Mycobacterium tuberculosis (strain ATCC 25618 / H37Rv) protein is Probable acetyl-CoA acetyltransferase (fadA4).